The chain runs to 373 residues: Sensor protein DegM (373 aa).

4 consecutive transmembrane segments (helical) span residues 27-47, 57-77, 91-111, and 122-142; these read ILLA…AIAV, LFLL…LCVN, YASL…LYLI, and VAGW…TYLF. The Histidine kinase domain maps to 170 to 370; it reads SIAHEVRNPL…KVVLSLPIEK (201 aa). His173 carries the post-translational modification Phosphohistidine; by autocatalysis.

The protein localises to the cell membrane. The enzyme catalyses ATP + protein L-histidine = ADP + protein N-phospho-L-histidine.. In terms of biological role, involved in a sensory transduction pathway that enhances the production of minor proteases. This chain is Sensor protein DegM (degM), found in Bacillus sp. (strain B21-2).